Reading from the N-terminus, the 432-residue chain is Probable imidazolonepropionase (432 aa).

2 residues coordinate 4-imidazolone-5-propanoate: tyrosine 159 and histidine 192. Tyrosine 159 is an N-formimidoyl-L-glutamate binding site. Fe(3+) is bound at residue histidine 260. Position 260 (histidine 260) interacts with Zn(2+). Glutamate 263 contacts 4-imidazolone-5-propanoate. Aspartate 334 provides a ligand contact to Fe(3+). Aspartate 334 lines the Zn(2+) pocket. Asparagine 336 contacts N-formimidoyl-L-glutamate.

Belongs to the metallo-dependent hydrolases superfamily. HutI family. It depends on Zn(2+) as a cofactor. Fe(3+) serves as cofactor.

It catalyses the reaction 4-imidazolone-5-propanoate + H2O = N-formimidoyl-L-glutamate. It functions in the pathway amino-acid degradation; L-histidine degradation into L-glutamate; N-formimidoyl-L-glutamate from L-histidine: step 3/3. The sequence is that of Probable imidazolonepropionase (amdhd1) from Xenopus tropicalis (Western clawed frog).